Here is a 419-residue protein sequence, read N- to C-terminus: S-adenosylmethionine synthase (419 aa).

ATP is bound at residue His-15. Residue Asp-17 participates in Mg(2+) binding. Position 43 (Glu-43) interacts with K(+). 2 residues coordinate L-methionine: Glu-56 and Gln-100. Residues 100-110 (QSPDIAQGVDE) are flexible loop. ATP is bound by residues 171–173 (DGK), 248–249 (KF), Asp-257, 263–264 (RK), Ala-280, and Lys-284. Asp-257 contributes to the L-methionine binding site. Position 288 (Lys-288) interacts with L-methionine.

The protein belongs to the AdoMet synthase family. As to quaternary structure, homotetramer; dimer of dimers. Requires Mg(2+) as cofactor. It depends on K(+) as a cofactor.

The protein localises to the cytoplasm. It catalyses the reaction L-methionine + ATP + H2O = S-adenosyl-L-methionine + phosphate + diphosphate. It functions in the pathway amino-acid biosynthesis; S-adenosyl-L-methionine biosynthesis; S-adenosyl-L-methionine from L-methionine: step 1/1. Its function is as follows. Catalyzes the formation of S-adenosylmethionine (AdoMet) from methionine and ATP. The overall synthetic reaction is composed of two sequential steps, AdoMet formation and the subsequent tripolyphosphate hydrolysis which occurs prior to release of AdoMet from the enzyme. This is S-adenosylmethionine synthase from Synechococcus sp. (strain CC9311).